The chain runs to 183 residues: Microfibrillar-associated protein 2 (183 aa).

The or 19 signal peptide spans 1–17 (MRAAYLFLLFLPAGLLA). Q18 bears the Pyrrolidone carboxylic acid mark. Y47, Y48, and Y50 each carry sulfotyrosine. A disordered region spans residues 58-94 (SEEQFQFQSQQQVQQEVIPAPTPEPGNAELEPTEPGP). Over residues 60-74 (EQFQFQSQQQVQQEV) the composition is skewed to low complexity. The region spanning 153-183 (CRDKFSKCGVMASSGLCQSVAASCARSCGSC) is the ShKT domain. 3 cysteine pairs are disulfide-bonded: C153–C183, C160–C176, and C169–C180.

Belongs to the MFAP family. As to quaternary structure, forms a ternary complex with BGN and ELN. Interacts with FBN1 (via N-terminal domain) and FBN2. In terms of processing, forms intermolecular disulfide bonds either with other MAGP-1 molecules or with other components of the microfibrils. May form transglutaminase cross-links. Post-translationally, O-glycosylated.

The protein localises to the secreted. Its subcellular location is the extracellular space. It is found in the extracellular matrix. Functionally, component of the elastin-associated microfibrils. In Homo sapiens (Human), this protein is Microfibrillar-associated protein 2 (MFAP2).